A 383-amino-acid chain; its full sequence is Putative glutamate--cysteine ligase 2-2 (383 aa).

The interval 35-56 is disordered; the sequence is RGDRDGAGGPPGGADPDGDLDG.

This sequence belongs to the glutamate--cysteine ligase type 2 family. YbdK subfamily.

It carries out the reaction L-cysteine + L-glutamate + ATP = gamma-L-glutamyl-L-cysteine + ADP + phosphate + H(+). ATP-dependent carboxylate-amine ligase which exhibits weak glutamate--cysteine ligase activity. In Frankia alni (strain DSM 45986 / CECT 9034 / ACN14a), this protein is Putative glutamate--cysteine ligase 2-2.